The sequence spans 335 residues: Probable cytosolic iron-sulfur protein assembly protein Ciao1 (335 aa).

7 WD repeats span residues 12 to 51, 57 to 96, 101 to 140, 146 to 185, 192 to 231, 250 to 289, and 301 to 335; these read GHKG…WTTK, GHKR…FECN, GHEN…EFEC, PHTQ…SDWD, SHTS…NDAG, QHSR…KRDE, and AHDQ…KMTE.

Belongs to the WD repeat CIA1 family.

Its function is as follows. Essential component of the cytosolic iron-sulfur (Fe/S) protein assembly machinery. Required for the maturation of extramitochondrial Fe/S proteins. This chain is Probable cytosolic iron-sulfur protein assembly protein Ciao1, found in Drosophila ananassae (Fruit fly).